A 553-amino-acid chain; its full sequence is Arginine--tRNA ligase (553 aa).

Positions 132 to 140 (PTGDLHIGH) match the 'HIGH' region motif.

It belongs to the class-I aminoacyl-tRNA synthetase family. In terms of assembly, monomer.

It is found in the cytoplasm. It carries out the reaction tRNA(Arg) + L-arginine + ATP = L-arginyl-tRNA(Arg) + AMP + diphosphate. In Staphylococcus aureus (strain Mu50 / ATCC 700699), this protein is Arginine--tRNA ligase.